A 440-amino-acid chain; its full sequence is Enolase 1-2 (440 aa).

Residues histidine 160 and glutamate 169 each contribute to the substrate site. Catalysis depends on glutamate 212, which acts as the Proton donor. 3 residues coordinate Mg(2+): aspartate 247, glutamate 296, and aspartate 321. Substrate-binding residues include glutamate 296 and aspartate 321. Lysine 346 serves as the catalytic Proton acceptor. Substrate is bound by residues 373-376 (SHRS) and lysine 397.

This sequence belongs to the enolase family. Homodimer. Requires Mg(2+) as cofactor.

Its subcellular location is the cytoplasm. It carries out the reaction (2R)-2-phosphoglycerate = phosphoenolpyruvate + H2O. It functions in the pathway carbohydrate degradation; glycolysis; pyruvate from D-glyceraldehyde 3-phosphate: step 4/5. The sequence is that of Enolase 1-2 (eno102) from Schizosaccharomyces pombe (strain 972 / ATCC 24843) (Fission yeast).